The sequence spans 224 residues: Phosphoglycolate phosphatase (224 aa).

The Nucleophile role is filled by Asp-11. Residues Asp-11, Asp-13, and Asp-177 each contribute to the Mg(2+) site.

Belongs to the HAD-like hydrolase superfamily. CbbY/CbbZ/Gph/YieH family. Requires Mg(2+) as cofactor.

It catalyses the reaction 2-phosphoglycolate + H2O = glycolate + phosphate. Its pathway is organic acid metabolism; glycolate biosynthesis; glycolate from 2-phosphoglycolate: step 1/1. Its function is as follows. Specifically catalyzes the dephosphorylation of 2-phosphoglycolate. Is involved in the dissimilation of the intracellular 2-phosphoglycolate formed during the DNA repair of 3'-phosphoglycolate ends, a major class of DNA lesions induced by oxidative stress. In Mannheimia succiniciproducens (strain KCTC 0769BP / MBEL55E), this protein is Phosphoglycolate phosphatase.